The primary structure comprises 214 residues: Pyridoxine/pyridoxamine 5'-phosphate oxidase (214 aa).

Substrate-binding positions include 8-11 (RTNY) and lysine 66. FMN is bound by residues 61-66 (RIVLIK), 76-77 (FT), arginine 82, lysine 83, and glutamine 105. Substrate is bound by residues tyrosine 123, arginine 127, and serine 131. FMN-binding positions include 140 to 141 (QS) and tryptophan 184. 190-192 (RLH) contributes to the substrate binding site. An FMN-binding site is contributed by arginine 194.

It belongs to the pyridoxamine 5'-phosphate oxidase family. In terms of assembly, homodimer. FMN is required as a cofactor.

It catalyses the reaction pyridoxamine 5'-phosphate + O2 + H2O = pyridoxal 5'-phosphate + H2O2 + NH4(+). It carries out the reaction pyridoxine 5'-phosphate + O2 = pyridoxal 5'-phosphate + H2O2. It participates in cofactor metabolism; pyridoxal 5'-phosphate salvage; pyridoxal 5'-phosphate from pyridoxamine 5'-phosphate: step 1/1. It functions in the pathway cofactor metabolism; pyridoxal 5'-phosphate salvage; pyridoxal 5'-phosphate from pyridoxine 5'-phosphate: step 1/1. In terms of biological role, catalyzes the oxidation of either pyridoxine 5'-phosphate (PNP) or pyridoxamine 5'-phosphate (PMP) into pyridoxal 5'-phosphate (PLP). This chain is Pyridoxine/pyridoxamine 5'-phosphate oxidase, found in Burkholderia thailandensis (strain ATCC 700388 / DSM 13276 / CCUG 48851 / CIP 106301 / E264).